A 141-amino-acid chain; its full sequence is Small ribosomal subunit protein uS12 (141 aa).

This sequence belongs to the universal ribosomal protein uS12 family. In terms of assembly, part of the 30S ribosomal subunit.

Functionally, with S4 and S5 plays an important role in translational accuracy. Located at the interface of the 30S and 50S subunits. In Methanosphaera stadtmanae (strain ATCC 43021 / DSM 3091 / JCM 11832 / MCB-3), this protein is Small ribosomal subunit protein uS12.